The following is a 197-amino-acid chain: Probable GTP-binding protein EngB (197 aa).

The 174-residue stretch at 22–195 folds into the EngB-type G domain; sequence ALPELALVGR…WQWIEERTGV (174 aa). GTP is bound by residues 30–37, 57–61, 75–78, 142–145, and 174–176; these read GRSNVGKS, GKTQT, DVPG, TKVD, and FSA. Mg(2+) is bound by residues Ser-37 and Thr-59.

The protein belongs to the TRAFAC class TrmE-Era-EngA-EngB-Septin-like GTPase superfamily. EngB GTPase family. Mg(2+) serves as cofactor.

In terms of biological role, necessary for normal cell division and for the maintenance of normal septation. The protein is Probable GTP-binding protein EngB of Limosilactobacillus fermentum (strain NBRC 3956 / LMG 18251) (Lactobacillus fermentum).